The primary structure comprises 308 residues: Olfactory receptor 5K1 (308 aa).

At 1–25 (MAEENHTMKNEFILTGFTDHPELKT) the chain is on the extracellular side. Residue N5 is glycosylated (N-linked (GlcNAc...) asparagine). The helical transmembrane segment at 26-46 (LLFVVFFAIYLITVVGNISLV) threads the bilayer. Over 47–54 (ALIFTHRR) the chain is Cytoplasmic. The helical transmembrane segment at 55-75 (LHTPMYIFLGNLALVDSCCAC) threads the bilayer. Topologically, residues 76–99 (AITPKMLENFFSENKRISLYECAV) are extracellular. The cysteines at positions 97 and 189 are disulfide-linked. The chain crosses the membrane as a helical span at residues 100–120 (QFYFLCTVETADCFLLAAMAY). The Cytoplasmic segment spans residues 121–139 (DRYVAICNPLQYHIMMSKK). Residues 140–160 (LCIQMTTGAFIAGNLHSMIHV) traverse the membrane as a helical segment. Over 161–196 (GLVFRLVFCGSNHINHFYCDILPLYRLSCVDPYINE) the chain is Extracellular. A helical membrane pass occupies residues 197–217 (LVLFIFSGSVQVFTIGSVLIS). Over 218–237 (YLYILLTIFKMKSKEGRAKA) the chain is Cytoplasmic. A helical membrane pass occupies residues 238–258 (FSTCASHFLSVSLFYGSLFFM). Residues 259–271 (YVRPNLLEEGDKD) lie on the Extracellular side of the membrane. The helical transmembrane segment at 272 to 292 (IPAAILFTIVVPLLNPFIYSL) threads the bilayer. Over 293-308 (RNREVISVLRKILMKK) the chain is Cytoplasmic.

The protein belongs to the G-protein coupled receptor 1 family.

It localises to the cell membrane. Odorant receptor. This Homo sapiens (Human) protein is Olfactory receptor 5K1 (OR5K1).